Reading from the N-terminus, the 539-residue chain is CTP synthase (539 aa).

The interval 1–267 (MTKYIFVTGG…DQKVVDFLHI (267 aa)) is amidoligase domain. Residue Ser-13 coordinates CTP. Ser-13 is a UTP binding site. 14 to 19 (SLGKGI) provides a ligand contact to ATP. Position 54 (Tyr-54) interacts with L-glutamine. Asp-71 is a binding site for ATP. Residues Asp-71 and Glu-141 each contribute to the Mg(2+) site. CTP is bound by residues 148–150 (DME), 188–193 (KSKPTQ), and Lys-224. Residues 188 to 193 (KSKPTQ) and Lys-224 contribute to the UTP site. The Glutamine amidotransferase type-1 domain occupies 294–537 (KITLVGKYVE…IGAASGLQVD (244 aa)). Gly-356 contacts L-glutamine. The Nucleophile; for glutamine hydrolysis role is filled by Cys-383. L-glutamine is bound by residues 384–387 (LGMQ), Glu-407, and Arg-465. Residues His-510 and Glu-512 contribute to the active site.

The protein belongs to the CTP synthase family. In terms of assembly, homotetramer.

The enzyme catalyses UTP + L-glutamine + ATP + H2O = CTP + L-glutamate + ADP + phosphate + 2 H(+). It catalyses the reaction L-glutamine + H2O = L-glutamate + NH4(+). The catalysed reaction is UTP + NH4(+) + ATP = CTP + ADP + phosphate + 2 H(+). Its pathway is pyrimidine metabolism; CTP biosynthesis via de novo pathway; CTP from UDP: step 2/2. With respect to regulation, allosterically activated by GTP, when glutamine is the substrate; GTP has no effect on the reaction when ammonia is the substrate. The allosteric effector GTP functions by stabilizing the protein conformation that binds the tetrahedral intermediate(s) formed during glutamine hydrolysis. Inhibited by the product CTP, via allosteric rather than competitive inhibition. Functionally, catalyzes the ATP-dependent amination of UTP to CTP with either L-glutamine or ammonia as the source of nitrogen. Regulates intracellular CTP levels through interactions with the four ribonucleotide triphosphates. This Lactobacillus delbrueckii subsp. bulgaricus (strain ATCC 11842 / DSM 20081 / BCRC 10696 / JCM 1002 / NBRC 13953 / NCIMB 11778 / NCTC 12712 / WDCM 00102 / Lb 14) protein is CTP synthase.